We begin with the raw amino-acid sequence, 448 residues long: Rhodopsin (448 aa).

Topologically, residues 2–33 are extracellular; sequence GRDLRDNETWWYNPSIVVHPHWREFDQVPDAV. The N-linked (GlcNAc...) asparagine glycan is linked to N8. A helical membrane pass occupies residues 34–58; the sequence is YYSLGIFIGICGIIGCGGNGIVIYL. At 59–70 the chain is on the cytoplasmic side; sequence FTKTKSLQTPAN. The helical transmembrane segment at 71-97 threads the bilayer; that stretch reads MFIINLAFSDFTFSLVNGFPLMTISCF. The Extracellular portion of the chain corresponds to 98-109; the sequence is LKKWIFGFAACK. C108 and C186 are oxidised to a cystine. A helical transmembrane segment spans residues 110–131; it reads VYGFIGGIFGFMSIMTMAMISI. Topologically, residues 132 to 151 are cytoplasmic; that stretch reads DRYNVIGRPMAASKKMSHRR. The helical transmembrane segment at 152-172 threads the bilayer; that stretch reads AFIMIIFVWLWSVLWAIGPIF. Residues 173-199 lie on the Extracellular side of the membrane; that stretch reads GWGAYTLEGVLCNCSFDYISRDSTTRS. A helical transmembrane segment spans residues 200–224; sequence NILCMFILGFFGPILIIFFCYFNIV. At 225 to 261 the chain is on the cytoplasmic side; the sequence is MSVSNHEKEMAAMAKRLNAKELRKAQAGANAEMRLAK. The chain crosses the membrane as a helical span at residues 262-283; the sequence is ISIVIVSQFLLSWSPYAVVALL. Residues 284–293 are Extracellular-facing; it reads AQFGPLEWVT. Residues 294-315 form a helical membrane-spanning segment; that stretch reads PYAAQLPVMFAKASAIHNPMIY. Residue K305 is modified to N6-(retinylidene)lysine. The Cytoplasmic portion of the chain corresponds to 316 to 448; that stretch reads SVSHPKFREA…QGVDNQAYQA (133 aa). Residues C336 and C337 are each lipidated (S-palmitoyl cysteine). A compositionally biased stretch (acidic residues) spans 343–352; that stretch reads ETEDDKDAET. The disordered stretch occupies residues 343–448; the sequence is ETEDDKDAET…QGVDNQAYQA (106 aa). Residues 359 to 391 are compositionally biased toward low complexity; sequence SSDAAPSADAAQMKEMMAMMQKMQQQQAAYPPQ. Pro residues predominate over residues 392–437; sequence GYAPPPQGYPPQGYPPQGYPPQGYPPQGYPPPPQGAPPQGAPPAAP.

It belongs to the G-protein coupled receptor 1 family. Opsin subfamily. In terms of processing, contains one covalently linked retinal chromophore. Upon light absorption, the covalently bound 11-cis-retinal is converted to all-trans-retinal. After hydrolysis of the Schiff base and release of the covalently bound all-trans-retinal, active rhodopsin is regenerated by binding of a fresh molecule of 11-cis-retinal. As to expression, retina, rhabdomere membrane of photoreceptor cells (at protein level).

The protein localises to the cell projection. Its subcellular location is the rhabdomere membrane. Photoreceptor required for image-forming vision at low light intensity. Light-induced isomerization of 11-cis to all-trans retinal triggers a conformational change that activates signaling via G-proteins. Signaling mediates the activation of phospholipase C. Subsequent receptor phosphorylation mediates displacement of the bound G-protein alpha subunit by arrestin and terminates signaling. The chain is Rhodopsin (RHO) from Todarodes pacificus (Japanese flying squid).